Reading from the N-terminus, the 163-residue chain is Large ribosomal subunit protein uL11 (163 aa).

It belongs to the universal ribosomal protein uL11 family. As to quaternary structure, part of the ribosomal stalk of the 50S ribosomal subunit. Interacts with L10 and the large rRNA to form the base of the stalk. L10 forms an elongated spine to which L12 dimers bind in a sequential fashion forming a multimeric L10(L12)X complex.

Its function is as follows. Forms part of the ribosomal stalk which helps the ribosome interact with GTP-bound translation factors. The chain is Large ribosomal subunit protein uL11 from Thermococcus onnurineus (strain NA1).